A 387-amino-acid chain; its full sequence is Phosphoglycerate kinase (387 aa).

Substrate-binding positions include 21–23 (DLN), Arg-36, 59–62 (HLGR), Arg-113, and Arg-146. Residues Lys-197, Glu-314, and 340 to 343 (GGDT) contribute to the ATP site.

It belongs to the phosphoglycerate kinase family. In terms of assembly, monomer.

It is found in the cytoplasm. It catalyses the reaction (2R)-3-phosphoglycerate + ATP = (2R)-3-phospho-glyceroyl phosphate + ADP. The protein operates within carbohydrate degradation; glycolysis; pyruvate from D-glyceraldehyde 3-phosphate: step 2/5. This is Phosphoglycerate kinase from Aeromonas hydrophila subsp. hydrophila (strain ATCC 7966 / DSM 30187 / BCRC 13018 / CCUG 14551 / JCM 1027 / KCTC 2358 / NCIMB 9240 / NCTC 8049).